The chain runs to 266 residues: Shikimate dehydrogenase (NADP(+)) (266 aa).

Shikimate is bound by residues 16-18 (SKS) and threonine 65. The active-site Proton acceptor is lysine 69. The shikimate site is built by asparagine 90 and aspartate 105. NADP(+)-binding positions include 128 to 132 (GAGGS) and leucine 211. Residue tyrosine 213 coordinates shikimate. Glycine 233 lines the NADP(+) pocket.

This sequence belongs to the shikimate dehydrogenase family. As to quaternary structure, homodimer.

The catalysed reaction is shikimate + NADP(+) = 3-dehydroshikimate + NADPH + H(+). It participates in metabolic intermediate biosynthesis; chorismate biosynthesis; chorismate from D-erythrose 4-phosphate and phosphoenolpyruvate: step 4/7. Functionally, involved in the biosynthesis of the chorismate, which leads to the biosynthesis of aromatic amino acids. Catalyzes the reversible NADPH linked reduction of 3-dehydroshikimate (DHSA) to yield shikimate (SA). The polypeptide is Shikimate dehydrogenase (NADP(+)) (Helicobacter pylori (strain J99 / ATCC 700824) (Campylobacter pylori J99)).